Consider the following 101-residue polypeptide: Large ribosomal subunit protein uL23 (101 aa).

Belongs to the universal ribosomal protein uL23 family. In terms of assembly, part of the 50S ribosomal subunit. Contacts protein L29, and trigger factor when it is bound to the ribosome.

Its function is as follows. One of the early assembly proteins it binds 23S rRNA. One of the proteins that surrounds the polypeptide exit tunnel on the outside of the ribosome. Forms the main docking site for trigger factor binding to the ribosome. This Corynebacterium efficiens (strain DSM 44549 / YS-314 / AJ 12310 / JCM 11189 / NBRC 100395) protein is Large ribosomal subunit protein uL23.